A 124-amino-acid polypeptide reads, in one-letter code: Ribonuclease pancreatic (124 aa).

Positions Lys1–Met13 are enriched in basic and acidic residues. Residues Lys1–Asn24 form a disordered region. 2 residues coordinate substrate: Lys7 and Arg10. His12 acts as the Proton acceptor in catalysis. 4 disulfide bridges follow: Cys26-Cys84, Cys40-Cys95, Cys58-Cys110, and Cys65-Cys72. Residues Lys41 to Thr45, Lys66, and Arg85 each bind substrate. His119 serves as the catalytic Proton donor.

The protein belongs to the pancreatic ribonuclease family. In terms of assembly, monomer. Interacts with and forms tight 1:1 complexes with RNH1. Dimerization of two such complexes may occur. Interaction with RNH1 inhibits this protein. In terms of tissue distribution, pancreas.

Its subcellular location is the secreted. It catalyses the reaction an [RNA] containing cytidine + H2O = an [RNA]-3'-cytidine-3'-phosphate + a 5'-hydroxy-ribonucleotide-3'-[RNA].. The enzyme catalyses an [RNA] containing uridine + H2O = an [RNA]-3'-uridine-3'-phosphate + a 5'-hydroxy-ribonucleotide-3'-[RNA].. Its function is as follows. Endonuclease that catalyzes the cleavage of RNA on the 3' side of pyrimidine nucleotides. Acts on single-stranded and double-stranded RNA. This chain is Ribonuclease pancreatic (RNASE1), found in Connochaetes taurinus (Blue wildebeest).